A 37-amino-acid polypeptide reads, in one-letter code: Cytochrome b6-f complex subunit 5 (37 aa).

Residues 5-25 (LLSGIVLGLVPVTIAGLFVTA) form a helical membrane-spanning segment.

This sequence belongs to the PetG family. In terms of assembly, the 4 large subunits of the cytochrome b6-f complex are cytochrome b6, subunit IV (17 kDa polypeptide, PetD), cytochrome f and the Rieske protein, while the 4 small subunits are PetG, PetL, PetM and PetN. The complex functions as a dimer.

The protein resides in the plastid. The protein localises to the chloroplast thylakoid membrane. Its function is as follows. Component of the cytochrome b6-f complex, which mediates electron transfer between photosystem II (PSII) and photosystem I (PSI), cyclic electron flow around PSI, and state transitions. PetG is required for either the stability or assembly of the cytochrome b6-f complex. This chain is Cytochrome b6-f complex subunit 5, found in Chlorella vulgaris (Green alga).